The chain runs to 216 residues: Co-chaperone protein SBA1 (216 aa).

Position 2 is an N-acetylserine (S2). Residues 5–108 (VINPQVAWAQ…LESEYWPRLT (104 aa)) enclose the CS domain. 2 consecutive repeats follow at residues 141-156 (AQGM…AGGA) and 160-174 (GGMD…AGGA). The disordered stretch occupies residues 169–216 (GGAGGAGSPDMAQLQQLLAQSGGNLDMGDFKENDEEDEEEEIEPEVKA). Residues 200-216 (ENDEEDEEEEIEPEVKA) are compositionally biased toward acidic residues.

It belongs to the p23/wos2 family. As to quaternary structure, interacts with HSP82.

In terms of biological role, acts as a co-chaperone. This chain is Co-chaperone protein SBA1 (SBA1), found in Saccharomyces cerevisiae (strain ATCC 204508 / S288c) (Baker's yeast).